Here is a 297-residue protein sequence, read N- to C-terminus: Nucleotide-binding protein BTH_I0482 (297 aa).

Gly-8–Ser-15 contributes to the ATP binding site. GTP is bound at residue Asp-57–Ser-60.

The protein belongs to the RapZ-like family.

Functionally, displays ATPase and GTPase activities. The sequence is that of Nucleotide-binding protein BTH_I0482 from Burkholderia thailandensis (strain ATCC 700388 / DSM 13276 / CCUG 48851 / CIP 106301 / E264).